Reading from the N-terminus, the 207-residue chain is Ribosomal RNA small subunit methyltransferase G (207 aa).

Residues Gly77, Phe82, 100–102, and Arg141 each bind S-adenosyl-L-methionine; that span reads ERS.

The protein belongs to the methyltransferase superfamily. RNA methyltransferase RsmG family.

It localises to the cytoplasm. In terms of biological role, specifically methylates the N7 position of a guanine in 16S rRNA. This chain is Ribosomal RNA small subunit methyltransferase G, found in Borrelia turicatae (strain 91E135).